The sequence spans 454 residues: Glutamyl-tRNA reductase (454 aa).

Substrate is bound by residues 50–53 (TCNR), S103, 108–110 (EDQ), and Q114. C51 acts as the Nucleophile in catalysis. 182–187 (GAGEMG) provides a ligand contact to NADP(+). The disordered stretch occupies residues 407-454 (LFDPNFGGDTPQPDRPDDIPRAAERGDISGDDLPDDVPNHIAEKVSDG). Basic and acidic residues-rich tracts occupy residues 418–434 (QPDRPDDIPRAAERGDI) and 443–454 (VPNHIAEKVSDG).

This sequence belongs to the glutamyl-tRNA reductase family. Homodimer.

It carries out the reaction (S)-4-amino-5-oxopentanoate + tRNA(Glu) + NADP(+) = L-glutamyl-tRNA(Glu) + NADPH + H(+). The protein operates within porphyrin-containing compound metabolism; protoporphyrin-IX biosynthesis; 5-aminolevulinate from L-glutamyl-tRNA(Glu): step 1/2. Catalyzes the NADPH-dependent reduction of glutamyl-tRNA(Glu) to glutamate 1-semialdehyde (GSA). The chain is Glutamyl-tRNA reductase from Haloquadratum walsbyi (strain DSM 16790 / HBSQ001).